Consider the following 136-residue polypeptide: Globin-2 (136 aa).

The region spanning valine 1 to serine 134 is the Globin domain. Histidine 89 lines the heme b pocket.

The protein belongs to the globin family. As to quaternary structure, homodimer.

The protein is Globin-2 of Phreagena soyoae (Deep-sea cold-seep clam).